The chain runs to 401 residues: Argininosuccinate synthase (401 aa).

Residues 9-17 and Ala35 contribute to the ATP site; that span reads AYSGGLDTS. Tyr86 lines the L-citrulline pocket. Gly116 serves as a coordination point for ATP. 3 residues coordinate L-aspartate: Thr118, Asn122, and Asp123. Asn122 is a binding site for L-citrulline. L-citrulline is bound by residues Arg126, Ser175, Ser184, Glu261, and Tyr273.

This sequence belongs to the argininosuccinate synthase family. Type 1 subfamily. As to quaternary structure, homotetramer.

It localises to the cytoplasm. It carries out the reaction L-citrulline + L-aspartate + ATP = 2-(N(omega)-L-arginino)succinate + AMP + diphosphate + H(+). The protein operates within amino-acid biosynthesis; L-arginine biosynthesis; L-arginine from L-ornithine and carbamoyl phosphate: step 2/3. The sequence is that of Argininosuccinate synthase from Aquifex aeolicus (strain VF5).